The sequence spans 284 residues: Ubiquinone biosynthesis protein COQ4, mitochondrial (284 aa).

Positions 165, 166, 169, and 181 each coordinate Zn(2+).

The protein belongs to the COQ4 family. As to quaternary structure, component of a multi-subunit COQ enzyme complex, composed of at least COQ3, COQ4, COQ5, COQ6, COQ7 and COQ9. It depends on Zn(2+) as a cofactor.

It is found in the mitochondrion inner membrane. The catalysed reaction is a 4-hydroxy-3-methoxy-5-(all-trans-polyprenyl)benzoate + H(+) = a 2-methoxy-6-(all-trans-polyprenyl)phenol + CO2. Its pathway is cofactor biosynthesis; ubiquinone biosynthesis. In terms of biological role, lyase that catalyzes the C1-decarboxylation of 4-hydroxy-3-methoxy-5-(all-trans-polyprenyl)benzoic acid into 2-methoxy-6-(all-trans-polyprenyl)phenol during ubiquinone biosynthesis. This Ajellomyces dermatitidis (strain ER-3 / ATCC MYA-2586) (Blastomyces dermatitidis) protein is Ubiquinone biosynthesis protein COQ4, mitochondrial.